A 212-amino-acid polypeptide reads, in one-letter code: Golgi SNAP receptor complex member 2 (212 aa).

Residue M1 is modified to N-acetylmethionine. The Cytoplasmic segment spans residues 1 to 190 (MEPLYQQTHK…LIEKRAFQDK (190 aa)). Residues 61–107 (NRRQNAKLRVDQLKYDVQHLQTALRNFQHRRQAKEQQERQRDELLSR) are a coiled coil. The IxM motif; signal for cargo packaging into COPII-coated vesicles motif lies at 118-120 (IPM). Residues 191–211 (YFMIGGMLLTCAVMFLVVQYL) form a helical; Anchor for type IV membrane protein membrane-spanning segment. Residue T212 is a topological domain, vesicular.

Belongs to the GOSR2 family. Part of a unique SNARE complex composed of the Golgi SNAREs GOSR1, STX5 and YKT6. Interacts with BET1.

The protein localises to the golgi apparatus. The protein resides in the cis-Golgi network membrane. It localises to the golgi apparatus membrane. It is found in the endoplasmic reticulum membrane. In terms of biological role, involved in transport of proteins from the cis/medial-Golgi to the trans-Golgi network. In Rattus norvegicus (Rat), this protein is Golgi SNAP receptor complex member 2 (Gosr2).